The primary structure comprises 367 residues: Pectate lyase 1 (367 aa).

The signal sequence occupies residues 1 to 21; the sequence is MASPCLIAFLVFLCAIVSCCS. Intrachain disulfides connect cysteine 28–cysteine 45 and cysteine 128–cysteine 147. N-linked (GlcNAc...) asparagine glycosylation occurs at asparagine 148. Aspartate 170 contributes to the Ca(2+) binding site. Residue asparagine 178 is glycosylated (N-linked (GlcNAc...) asparagine). 2 residues coordinate Ca(2+): aspartate 194 and aspartate 198. Residue arginine 250 is part of the active site. Cysteine 306 and cysteine 312 are disulfide-bonded.

It belongs to the polysaccharide lyase 1 family. Amb a subfamily. It depends on Ca(2+) as a cofactor.

The catalysed reaction is Eliminative cleavage of (1-&gt;4)-alpha-D-galacturonan to give oligosaccharides with 4-deoxy-alpha-D-galact-4-enuronosyl groups at their non-reducing ends.. The protein operates within glycan metabolism; pectin degradation; 2-dehydro-3-deoxy-D-gluconate from pectin: step 2/5. In terms of biological role, has pectate lyase activity. In Juniperus virginiana (Eastern redcedar), this protein is Pectate lyase 1.